Consider the following 467-residue polypeptide: Glutamate--tRNA ligase (467 aa).

The 'HIGH' region motif lies at P9 to G19. A 'KMSKS' region motif is present at residues K237 to R241. K240 provides a ligand contact to ATP.

It belongs to the class-I aminoacyl-tRNA synthetase family. Glutamate--tRNA ligase type 1 subfamily. In terms of assembly, monomer.

Its subcellular location is the cytoplasm. The catalysed reaction is tRNA(Glu) + L-glutamate + ATP = L-glutamyl-tRNA(Glu) + AMP + diphosphate. In terms of biological role, catalyzes the attachment of glutamate to tRNA(Glu) in a two-step reaction: glutamate is first activated by ATP to form Glu-AMP and then transferred to the acceptor end of tRNA(Glu). In Xylella fastidiosa (strain M23), this protein is Glutamate--tRNA ligase.